Consider the following 160-residue polypeptide: 3-hydroxyacyl-[acyl-carrier-protein] dehydratase FabZ (160 aa).

His-60 is an active-site residue.

It belongs to the thioester dehydratase family. FabZ subfamily.

It localises to the cytoplasm. It catalyses the reaction a (3R)-hydroxyacyl-[ACP] = a (2E)-enoyl-[ACP] + H2O. In terms of biological role, involved in unsaturated fatty acids biosynthesis. Catalyzes the dehydration of short chain beta-hydroxyacyl-ACPs and long chain saturated and unsaturated beta-hydroxyacyl-ACPs. This is 3-hydroxyacyl-[acyl-carrier-protein] dehydratase FabZ from Rhodospirillum rubrum (strain ATCC 11170 / ATH 1.1.1 / DSM 467 / LMG 4362 / NCIMB 8255 / S1).